The chain runs to 435 residues: Transcription activator ACTTR (435 aa).

The segment at residues Cys16–Cys43 is a DNA-binding region (zn(2)-C6 fungal-type). Residues Ala48–Ser89 are disordered. The span at Arg50–Arg59 shows a compositional bias: basic residues. The span at Lys60–Gln74 shows a compositional bias: basic and acidic residues. A compositionally biased stretch (polar residues) spans Pro76 to Ser89.

It localises to the nucleus. Functionally, transcription factor that regulates the expression of the gene clusters that mediate the biosynthesis of the host-selective toxins (HSTs) ACT-toxins responsible for brown spot of tangerine disease by the tangerine pathotype which affects tangerines and mandarins. ACT-toxins consist of three moieties, 9,10-epoxy-8-hydroxy-9-methyl-decatrienoic acid (EDA), valine and a polyketide. ACT-toxin I is toxic to both citrus and pear; toxin II the 5''-deoxy derivative of ACT-toxin I, is highly toxic to pear and slightly toxic to citrus. On cellular level, ACT-toxins affect plasma membrane of susceptible cells and cause a sudden increase in loss of K(+) after a few minutes of toxin treatment. This Alternaria alternata (Alternaria rot fungus) protein is Transcription activator ACTTR.